The sequence spans 1189 residues: Zinc finger CCCH domain-containing protein 6 (1189 aa).

Positions 1–12 (MTDSEHAGHDRE) are enriched in basic and acidic residues. A disordered region spans residues 1-105 (MTDSEHAGHD…HKKRTGFYRD (105 aa)). Residues 13–28 (DGELEDGEIDDAGFEE) show a composition bias toward acidic residues. The stretch at 27–73 (EEIQEKEAKENEKQKSEKAYRKSRKKHKKEREKKKSKRRKREKHKHN) forms a coiled coil. The segment covering 29–46 (IQEKEAKENEKQKSEKAY) has biased composition (basic and acidic residues). The segment covering 47–73 (RKSRKKHKKEREKKKSKRRKREKHKHN) has biased composition (basic residues). 3 C3H1-type zinc fingers span residues 273–299 (KGKQ…HDAE), 301–328 (EKRK…HNEF), and 329–352 (PCKF…HDDL). Residues 353 to 385 (TKETKKLLDKVLNTDEELINEDERELEELRKRG) adopt a coiled-coil conformation. Disordered stretches follow at residues 451 to 530 (FYTS…GPQN), 630 to 659 (PPVV…PVPG), 676 to 755 (YQED…GNQV), 947 to 1026 (LEQF…PYAP), and 1051 to 1189 (PRDH…SPFC). Residues 461-478 (QFQGSSPHPQHIYSSGSS) are compositionally biased toward low complexity. The segment covering 505–525 (AGPPGLPVPQSPPLPPGPPEI) has biased composition (pro residues). The segment covering 639 to 659 (HGSGSDGSSTRTGHGPLPVPG) has biased composition (low complexity). Residues 718 to 741 (KTLQKQTETLRNQQQPSTELSTPT) are compositionally biased toward polar residues. A compositionally biased stretch (basic and acidic residues) spans 961–973 (GDPRLQKNFDPRL). 2 stretches are compositionally biased toward low complexity: residues 1009–1020 (SGAGTSNSGSGA) and 1056–1069 (SSST…SSGE). Residue S1158 is modified to Phosphoserine. Residues 1164–1179 (DPGRETDDKSLKEVFK) show a composition bias toward basic and acidic residues.

The protein is Zinc finger CCCH domain-containing protein 6 (ZC3H6) of Homo sapiens (Human).